Consider the following 622-residue polypeptide: Lamin Dm0 (622 aa).

Positions 1 to 50 are disordered; it reads MSSKSRRAGTATPQPGNTSTPRPPSAGPQPPPPSTHSQTASSPLSPTRHS. S2 carries the post-translational modification N-acetylserine. Residues 2-56 form a head region; the sequence is SSKSRRAGTATPQPGNTSTPRPPSAGPQPPPPSTHSQTASSPLSPTRHSRVAEKV. Phosphothreonine occurs at positions 10, 12, and 20. Pro residues predominate over residues 21-34; the sequence is PRPPSAGPQPPPPS. A phosphoserine mark is found at S25 and S34. T39 carries the phosphothreonine modification. S41, S42, and S45 each carry phosphoserine. T47 carries the post-translational modification Phosphothreonine. An IF rod domain is found at 54–410; sequence EKVELQNLND…KLLVGEEARL (357 aa). The segment at 55-91 is coil 1A; it reads KVELQNLNDRLATYIDRVRNLETENSRLTIEVQTTRD. The interval 92 to 103 is linker 1; the sequence is TVTRETTNIKNI. The segment at 104 to 241 is coil 1B; the sequence is FEAELLETRR…QIHSQEINES (138 aa). Residue S235 is modified to Phosphoserine. Residues 242–265 are linker 2; it reads RRIKQTEYSEIDGRLSSEYDAKLK. Y249 is modified (phosphotyrosine). S250 and S311 each carry phosphoserine. A coil 2 region spans residues 266–408; sequence QSLQELRAQY…YDKLLVGEEA (143 aa). A tail region spans residues 409–619; sequence RLNITPATNT…GDPQQSNEKC (211 aa). Phosphothreonine occurs at positions 413 and 435. Residues 429 to 440 are compositionally biased toward polar residues; that stretch reads RNSTRATPSRRT. A disordered region spans residues 429 to 448; that stretch reads RNSTRATPSRRTPSAAVKRK. S442 is modified (phosphoserine). The Nuclear localization signal signature appears at 446–451; that stretch reads KRKRAV. Phosphoserine is present on residues S455 and S459. Residues 461–588 enclose the LTD domain; the sequence is ADYYVSASAK…RIVSQHTSSS (128 aa). Residue S595 is modified to Phosphoserine. T597 carries the phosphothreonine modification. The tract at residues 603-622 is disordered; it reads EQLYHQQGDPQQSNEKCAIM. Polar residues predominate over residues 605-622; the sequence is LYHQQGDPQQSNEKCAIM. Phosphoserine is present on S615. C619 is subject to Cysteine methyl ester. C619 carries the S-farnesyl cysteine lipid modification. The propeptide at 620–622 is removed in mature form; sequence AIM.

It belongs to the intermediate filament family. Interacts directly with LBR. Interacts with MAN1. Interacts with Ote. In terms of processing, three forms of lamin have been identified in D.melanogaster, lamin Dm0 is rapidly processed to lamin Dm1 in the cytoplasm, Dm1 is then assembled in the nuclear envelope and is then phosphorylated, forming lamin Dm2. In terms of tissue distribution, constitutively expressed in all tissues (at protein level). Expressed in spermatocytes (at protein level).

Its subcellular location is the nucleus. The protein localises to the nucleus inner membrane. The protein resides in the nucleus envelope. It localises to the nucleus lamina. It is found in the cytoplasm. Its subcellular location is the cytoskeleton. The protein localises to the spindle pole. Functionally, lamins are components of the nuclear lamina, a fibrous layer on the nucleoplasmic side of the inner nuclear membrane, which is thought to provide a framework for the nuclear envelope and may also interact with chromatin. May have a role in the localization of the LEM domain proteins Ote, bocks and MAN1 to the nuclear membrane. In spermatocytes, plays a role in maintaining type-A lamin LamC nuclear localization; regulates meiotic cytokinesis by maintaining the structure of the spindle envelope, and by contributing to the formation of the contractile ring and central spindle. Required for nuclear migration and to link the microtubule organizing center (MTOC) to the nucleus. In addition, is required for nuclear envelope localization of klar. The polypeptide is Lamin Dm0 (Drosophila melanogaster (Fruit fly)).